The primary structure comprises 101 residues: Small ribosomal subunit protein uS14 (101 aa).

The protein belongs to the universal ribosomal protein uS14 family. In terms of assembly, part of the 30S ribosomal subunit. Contacts proteins S3 and S10.

Functionally, binds 16S rRNA, required for the assembly of 30S particles and may also be responsible for determining the conformation of the 16S rRNA at the A site. The protein is Small ribosomal subunit protein uS14 of Paramagnetospirillum magneticum (strain ATCC 700264 / AMB-1) (Magnetospirillum magneticum).